A 328-amino-acid polypeptide reads, in one-letter code: 3-ketodihydrosphingosine reductase TSC10 (328 aa).

An NADP(+)-binding site is contributed by L16. Residues G19, S21, and G23 each coordinate NADPH. Residues 19–23 (GASQG) carry the GXSXG motif. L24 provides a ligand contact to NADP(+). NADPH is bound by residues R44, K48, and D73. NADP(+) is bound at residue D73. S161 serves as the catalytic Proton donor. Residues Y175, K179, and S210 each contribute to the NADP(+) site. Y175 acts as the Proton acceptor in catalysis. The Lowers pKa of active site Tyr role is filled by K179. Residues 277 to 297 (FFQVIVSFIFSIIAPIANYVV) traverse the membrane as a helical segment.

Belongs to the short-chain dehydrogenases/reductases (SDR) family.

It localises to the endoplasmic reticulum membrane. It carries out the reaction sphinganine + NADP(+) = 3-oxosphinganine + NADPH + H(+). It functions in the pathway lipid metabolism; sphingolipid metabolism. Its function is as follows. Catalyzes the reduction of 3'-oxosphinganine (3-ketodihydrosphingosine/KDS) to sphinganine (dihydrosphingosine/DHS), the second step of de novo sphingolipid biosynthesis. The polypeptide is 3-ketodihydrosphingosine reductase TSC10 (TSC10) (Debaryomyces hansenii (strain ATCC 36239 / CBS 767 / BCRC 21394 / JCM 1990 / NBRC 0083 / IGC 2968) (Yeast)).